The sequence spans 309 residues: Acetylglutamate kinase (309 aa).

Substrate is bound by residues 82 to 83, Arg104, and Asn206; that span reads GG.

Belongs to the acetylglutamate kinase family. ArgB subfamily.

It localises to the cytoplasm. It carries out the reaction N-acetyl-L-glutamate + ATP = N-acetyl-L-glutamyl 5-phosphate + ADP. Its pathway is amino-acid biosynthesis; L-arginine biosynthesis; N(2)-acetyl-L-ornithine from L-glutamate: step 2/4. Functionally, catalyzes the ATP-dependent phosphorylation of N-acetyl-L-glutamate. The polypeptide is Acetylglutamate kinase (Cupriavidus metallidurans (strain ATCC 43123 / DSM 2839 / NBRC 102507 / CH34) (Ralstonia metallidurans)).